The sequence spans 441 residues: ATP-dependent protease ATPase subunit HslU (441 aa).

ATP contacts are provided by residues isoleucine 18, glycine 60 to glutamate 65, aspartate 254, glutamate 319, and arginine 391.

This sequence belongs to the ClpX chaperone family. HslU subfamily. As to quaternary structure, a double ring-shaped homohexamer of HslV is capped on each side by a ring-shaped HslU homohexamer. The assembly of the HslU/HslV complex is dependent on binding of ATP.

It is found in the cytoplasm. Functionally, ATPase subunit of a proteasome-like degradation complex; this subunit has chaperone activity. The binding of ATP and its subsequent hydrolysis by HslU are essential for unfolding of protein substrates subsequently hydrolyzed by HslV. HslU recognizes the N-terminal part of its protein substrates and unfolds these before they are guided to HslV for hydrolysis. The chain is ATP-dependent protease ATPase subunit HslU from Shewanella loihica (strain ATCC BAA-1088 / PV-4).